A 338-amino-acid chain; its full sequence is Ketol-acid reductoisomerase (NADP(+)) (338 aa).

In terms of domain architecture, KARI N-terminal Rossmann spans 1 to 181 (MNVFYDKDAD…GGGRAGIIET (181 aa)). NADP(+)-binding positions include 24–27 (YGSQ), arginine 47, and serine 52. Histidine 107 is an active-site residue. An NADP(+)-binding site is contributed by glycine 133. In terms of domain architecture, KARI C-terminal knotted spans 182–327 (NFREETETDL…AKLRAMMPWI (146 aa)). Aspartate 190, glutamate 194, glutamate 226, and glutamate 230 together coordinate Mg(2+). Substrate is bound at residue serine 251.

It belongs to the ketol-acid reductoisomerase family. It depends on Mg(2+) as a cofactor.

It carries out the reaction (2R)-2,3-dihydroxy-3-methylbutanoate + NADP(+) = (2S)-2-acetolactate + NADPH + H(+). The enzyme catalyses (2R,3R)-2,3-dihydroxy-3-methylpentanoate + NADP(+) = (S)-2-ethyl-2-hydroxy-3-oxobutanoate + NADPH + H(+). Its pathway is amino-acid biosynthesis; L-isoleucine biosynthesis; L-isoleucine from 2-oxobutanoate: step 2/4. The protein operates within amino-acid biosynthesis; L-valine biosynthesis; L-valine from pyruvate: step 2/4. Its function is as follows. Involved in the biosynthesis of branched-chain amino acids (BCAA). Catalyzes an alkyl-migration followed by a ketol-acid reduction of (S)-2-acetolactate (S2AL) to yield (R)-2,3-dihydroxy-isovalerate. In the isomerase reaction, S2AL is rearranged via a Mg-dependent methyl migration to produce 3-hydroxy-3-methyl-2-ketobutyrate (HMKB). In the reductase reaction, this 2-ketoacid undergoes a metal-dependent reduction by NADPH to yield (R)-2,3-dihydroxy-isovalerate. This Burkholderia ambifaria (strain MC40-6) protein is Ketol-acid reductoisomerase (NADP(+)).